The sequence spans 238 residues: Purine nucleoside phosphorylase DeoD-type (238 aa).

Residue histidine 4 coordinates a purine D-ribonucleoside. Residues glycine 20, arginine 24, arginine 43, and arginine 87 to serine 90 contribute to the phosphate site. A purine D-ribonucleoside contacts are provided by residues glutamate 179 to glutamate 181 and serine 203 to aspartate 204. Aspartate 204 (proton donor) is an active-site residue.

This sequence belongs to the PNP/UDP phosphorylase family. As to quaternary structure, homohexamer; trimer of homodimers.

The catalysed reaction is a purine D-ribonucleoside + phosphate = a purine nucleobase + alpha-D-ribose 1-phosphate. It carries out the reaction a purine 2'-deoxy-D-ribonucleoside + phosphate = a purine nucleobase + 2-deoxy-alpha-D-ribose 1-phosphate. In terms of biological role, catalyzes the reversible phosphorolytic breakdown of the N-glycosidic bond in the beta-(deoxy)ribonucleoside molecules, with the formation of the corresponding free purine bases and pentose-1-phosphate. The protein is Purine nucleoside phosphorylase DeoD-type of Mannheimia succiniciproducens (strain KCTC 0769BP / MBEL55E).